The sequence spans 800 residues: Aldehyde dehydrogenase family 16 member A1 (800 aa).

The protein belongs to the aldehyde dehydrogenase family. As to quaternary structure, interacts with SPG21.

In Bos taurus (Bovine), this protein is Aldehyde dehydrogenase family 16 member A1 (ALDH16A1).